A 124-amino-acid polypeptide reads, in one-letter code: CBS domain-containing protein MJ0729 (124 aa).

2 CBS domains span residues 10–67 (MNKD…IEDL) and 70–124 (LIDE…YKNR).

As to quaternary structure, exhibits a pH-dependent oligomerization state: at pH 7, the dominant species is a dimer, where each monomer is a two-CBS domain protein, and at pH 4.5-4.8, the dominant species is a tetramer, with an oblong shape. At pH 2.5, there is formation of intermolecular hydrogen bonds, suggesting the presence of high-molecular weight species. The physiological dimeric species is thermal and chemically very stable.

This chain is CBS domain-containing protein MJ0729, found in Methanocaldococcus jannaschii (strain ATCC 43067 / DSM 2661 / JAL-1 / JCM 10045 / NBRC 100440) (Methanococcus jannaschii).